We begin with the raw amino-acid sequence, 285 residues long: tRNA (cytidine(32)/guanosine(34)-2'-O)-methyltransferase (285 aa).

Residues glycine 53, tryptophan 55, aspartate 83, aspartate 99, and aspartate 124 each contribute to the S-adenosyl-L-methionine site. The active-site Proton acceptor is the lysine 164.

The protein belongs to the class I-like SAM-binding methyltransferase superfamily. RNA methyltransferase RlmE family. TRM7 subfamily.

It localises to the cytoplasm. The catalysed reaction is cytidine(32)/guanosine(34) in tRNA + 2 S-adenosyl-L-methionine = 2'-O-methylcytidine(32)/2'-O-methylguanosine(34) in tRNA + 2 S-adenosyl-L-homocysteine + 2 H(+). Functionally, methylates the 2'-O-ribose of nucleotides at positions 32 and 34 of the tRNA anticodon loop of substrate tRNAs. Requires trm732 for methylation of the cytidine at position 32 of the anticodon loop of substrate tRNAs. Requires trm734 for methylation of the nucleotide at position 34 of the anticodon loop of substrate tRNAs. Methylates tRNA(Phe). The protein is tRNA (cytidine(32)/guanosine(34)-2'-O)-methyltransferase of Schizosaccharomyces pombe (strain 972 / ATCC 24843) (Fission yeast).